The sequence spans 300 residues: Protoheme IX farnesyltransferase (300 aa).

Transmembrane regions (helical) follow at residues 24–44, 48–68, 94–114, 118–138, 146–166, 172–192, 217–237, 239–259, and 278–298; these read VTQL…PGMV, VLLG…AINC, LQIL…LYTF, LTMW…TLLL, IVIG…AVTG, AWIL…VLAL, LHIL…FISG, SGAV…AYAW, and IVYL…RPVI.

It belongs to the UbiA prenyltransferase family. Protoheme IX farnesyltransferase subfamily.

It is found in the cell inner membrane. The catalysed reaction is heme b + (2E,6E)-farnesyl diphosphate + H2O = Fe(II)-heme o + diphosphate. Its pathway is porphyrin-containing compound metabolism; heme O biosynthesis; heme O from protoheme: step 1/1. Converts heme B (protoheme IX) to heme O by substitution of the vinyl group on carbon 2 of heme B porphyrin ring with a hydroxyethyl farnesyl side group. The protein is Protoheme IX farnesyltransferase of Burkholderia thailandensis (strain ATCC 700388 / DSM 13276 / CCUG 48851 / CIP 106301 / E264).